The following is a 38-amino-acid chain: Large ribosomal subunit protein bL36 (38 aa).

The protein belongs to the bacterial ribosomal protein bL36 family.

This Limosilactobacillus fermentum (strain NBRC 3956 / LMG 18251) (Lactobacillus fermentum) protein is Large ribosomal subunit protein bL36.